The chain runs to 266 residues: Vesicle-associated protein 4-1 (266 aa).

Positions 28–57 (STTSSSSTQNPNQNYRSRHGNRNTDISAVS) are disordered. The region spanning 76–199 (RLRLDPSSYL…VEQVLRVIFI (124 aa)) is the MSP domain. A coiled-coil region spans residues 200–228 (DADRPSAALEKLKRQLDEAEAAVEARKKP). The span at 219–229 (EAAVEARKKPP) shows a compositional bias: basic and acidic residues. Positions 219–239 (EAAVEARKKPPPETGPRVVGE) are disordered. Ser264 is subject to Phosphoserine.

This sequence belongs to the VAMP-associated protein (VAP) (TC 9.B.17) family.

Functionally, may play a role in vesicle trafficking. The protein is Vesicle-associated protein 4-1 (PVA41) of Arabidopsis thaliana (Mouse-ear cress).